Consider the following 704-residue polypeptide: Polyribonucleotide nucleotidyltransferase (704 aa).

Residues aspartate 487 and aspartate 493 each contribute to the Mg(2+) site. The KH domain maps to 554 to 613; sequence PRLLTIKIHPDKIREVIGKGGSTIQAITKETGTQIDIQDDGTIIIASVNAIAAQAAKSRI. Residues 623–691 enclose the S1 motif domain; sequence GRIYEGKVAK…KQGRIRLSIK (69 aa).

This sequence belongs to the polyribonucleotide nucleotidyltransferase family. As to quaternary structure, component of the RNA degradosome, which is a multiprotein complex involved in RNA processing and mRNA degradation. Mg(2+) serves as cofactor.

The protein localises to the cytoplasm. The catalysed reaction is RNA(n+1) + phosphate = RNA(n) + a ribonucleoside 5'-diphosphate. Its function is as follows. Involved in mRNA degradation. Catalyzes the phosphorolysis of single-stranded polyribonucleotides processively in the 3'- to 5'-direction. In Xanthomonas euvesicatoria pv. vesicatoria (strain 85-10) (Xanthomonas campestris pv. vesicatoria), this protein is Polyribonucleotide nucleotidyltransferase.